Reading from the N-terminus, the 74-residue chain is Conotoxin Vc6.8 (74 aa).

The signal sequence occupies residues 1–19; it reads MEKLTILLLVAAVLMSTQA. The propeptide occupies 20–34; sequence LMQEQRQKAKINLFS. Disulfide bonds link cysteine 49–cysteine 62, cysteine 55–cysteine 66, and cysteine 61–cysteine 70.

This sequence belongs to the conotoxin O2 superfamily. As to expression, expressed by the venom duct.

The protein localises to the secreted. In terms of biological role, inhibits voltage-gated ion channels. In Conus victoriae (Queen Victoria cone), this protein is Conotoxin Vc6.8.